We begin with the raw amino-acid sequence, 245 residues long: Eukaryotic translation initiation factor 6 (245 aa).

Tyrosine 113 bears the Phosphotyrosine mark. Threonine 165 carries the post-translational modification Phosphothreonine. At serine 166 the chain carries Phosphoserine. Phosphoserine; by CK1 occurs at positions 174 and 175. Serine 235 is subject to Phosphoserine; by PKC. Phosphoserine occurs at positions 239 and 243.

This sequence belongs to the eIF-6 family. Monomer. Associates with the 60S ribosomal subunit. Interacts with RACK1. Interacts with DICER1, AGO2, TARBP2, MOV10 and RPL7A; they form a large RNA-induced silencing complex (RISC). Phosphorylation at Ser-174 and Ser-175 by CSNK1D/CK1 promotes nuclear export. Post-translationally, ufmylated by UFL1. As to expression, expressed at very high levels in colon carcinoma with lower levels in normal colon and ileum and lowest levels in kidney and muscle (at protein level).

The protein localises to the cytoplasm. It localises to the nucleus. The protein resides in the nucleolus. Binds to the 60S ribosomal subunit and prevents its association with the 40S ribosomal subunit to form the 80S initiation complex in the cytoplasm. Behaves as a stimulatory translation initiation factor downstream insulin/growth factors. Is also involved in ribosome biogenesis. Associates with pre-60S subunits in the nucleus and is involved in its nuclear export. Cytoplasmic release of TIF6 from 60S subunits and nuclear relocalization is promoted by a RACK1 (RACK1)-dependent protein kinase C activity. In tissues responsive to insulin, controls fatty acid synthesis and glycolysis by exerting translational control of adipogenic transcription factors such as CEBPB, CEBPD and ATF4 that have G/C rich or uORF in their 5'UTR. Required for ROS-dependent megakaryocyte maturation and platelets formation, controls the expression of mitochondrial respiratory chain genes involved in reactive oxygen species (ROS) synthesis. Involved in miRNA-mediated gene silencing by the RNA-induced silencing complex (RISC). Required for both miRNA-mediated translational repression and miRNA-mediated cleavage of complementary mRNAs by RISC. Modulates cell cycle progression and global translation of pre-B cells, its activation seems to be rate-limiting in tumorigenesis and tumor growth. In Homo sapiens (Human), this protein is Eukaryotic translation initiation factor 6.